Reading from the N-terminus, the 923-residue chain is Progesterone receptor (923 aa).

Residues 1–11 show a composition bias toward basic and acidic residues; it reads MTELQAKDPRT. A disordered region spans residues 1–49; that stretch reads MTELQAKDPRTLHTSGAAPSPTHVGSPLLARLDPDPFQGSQHSDASSVV. An AF3; mediates transcriptional activation (in isoform B) region spans residues 1-164; it reads MTELQAKDPR…PATKGLLSPL (164 aa). Residues 1-556 form a modulating, Pro-Rich region; that stretch reads MTELQAKDPR…YGFDSLPQKI (556 aa). A Glycyl lysine isopeptide (Lys-Gly) (interchain with G-Cter in SUMO) cross-link involves residue K7. Phosphoserine is present on S20. Residues 38 to 49 show a composition bias toward polar residues; that stretch reads QGSQHSDASSVV. The LXXL motif 1 signature appears at 56–60; the sequence is LDRLL. The segment at 67–111 is disordered; the sequence is AQELPDEKTQNQQSLSDVEGAFSGVEASRRRSRNPRAPEKDSRLL. S82 is subject to Phosphoserine. The LXXL motif 2 signature appears at 115–119; the sequence is LDTLL. Phosphoserine is present on residues S130 and S162. The disordered stretch occupies residues 152–239; it reads RSVPATKGLL…EGSAGPLLKS (88 aa). The interval 165–304 is mediates transcriptional transrepression (in isoform A); the sequence is MSRPESKAGD…LATTVVDFIH (140 aa). Positions 184–188 match the Nuclear localization signal motif; that stretch reads VLPKA. S190 and S213 each carry phosphoserine. Phosphoserine; by MAPK1 is present on S293. Residues 333-371 form a disordered region; it reads AAQVPFAPPRGSPSAPSPPVPCGDFPDCTYPPEGDPKED. Residues 338–353 show a composition bias toward pro residues; it reads FAPPRGSPSAPSPPVP. S344 is modified (phosphoserine; by MAPK). A Glycyl lysine isopeptide (Lys-Gly) (interchain with G-Cter in SUMO); alternate cross-link involves residue K387. K387 participates in a covalent cross-link: Glycyl lysine isopeptide (Lys-Gly) (interchain with G-Cter in ubiquitin); alternate. The residue at position 399 (S399) is a Phosphoserine; by CDK2. The interval 412–435 is disordered; it reads TFPDFPLPPRPPRAPPSRPGEAAV. Residues 416 to 429 are compositionally biased toward pro residues; sequence FPLPPRPPRAPPSR. Residues 450 to 536 form an AF1; mediates transcriptional activation region; the sequence is SALECILYKA…VYPPYLNYLR (87 aa). A Glycyl lysine isopeptide (Lys-Gly) (interchain with G-Cter in SUMO) cross-link involves residue K521. 2 NR C4-type zinc fingers span residues 557–577 and 593–617; these read CLIC…CGSC and CAGR…LRKC. Residues 557-629 constitute a DNA-binding region (nuclear receptor); sequence CLICGDEASG…AGMVLGGRKF (73 aa). S666 bears the Phosphoserine mark. One can recognise an NR LBD domain in the interval 669-903; the sequence is QEIQLVPPLI…EFPEMMSEVI (235 aa). The interval 677 to 923 is AF2; mediates transcriptional activation; sequence LINLLMSIEP…MVKPLLFHKK (247 aa). R756 contributes to the progesterone binding site.

Belongs to the nuclear hormone receptor family. NR3 subfamily. In terms of assembly, interacts with SMARD1 and UNC45A. Interacts with CUEDC2; the interaction promotes ubiquitination, decreases sumoylation, and represses transcriptional activity. Interacts with PIAS3; the interaction promotes sumoylation of PR in a hormone-dependent manner, inhibits DNA-binding, and alters nuclear export. Interacts with SP1; the interaction requires ligand-induced phosphorylation on Ser-344. Interacts with PRMT2. Isoform A interacts with NCOR2. Isoform B (but not isoform A) interacts with NCOA2 and NCOA1. Isoform B (but not isoform A) interacts with KLF9. Interacts with GTF2B. Phosphorylated on multiple serine sites. Several of these sites are hormone-dependent. Phosphorylation on Ser-293 is highly hormone-dependent and modulates ubiquitination and sumoylation on Lys-387. Phosphorylation on Ser-344 also requires induction by hormone. Basal phosphorylation on Ser-82, Ser-190 and Ser-399 is increased in response to progesterone and can be phosphorylated in vitro by the CDK2-A1 complex. Increased levels of phosphorylation on Ser-399 also in the presence of EGF, heregulin, IGF, PMA and FBS. Phosphorylation at this site by CDK2 is ligand-independent, and increases nuclear translocation and transcriptional activity. Phosphorylation at Ser-293, but not at Ser-190, is impaired during the G(2)/M phase of the cell cycle. Phosphorylation on Ser-344 by ERK1/2 MAPK is required for interaction with SP1. In terms of processing, sumoylation is hormone-dependent and represses transcriptional activity. Sumoylation on all three sites is enhanced by PIAS3. Desumoylated by SENP1. Sumoylation on Lys-387, the main site of sumoylation, is repressed by ubiquitination on the same site, and modulated by phosphorylation at Ser-293. Post-translationally, ubiquitination is hormone-dependent and represses sumoylation on the same site. Promoted by MAPK-mediated phosphorylation on Ser-293. Ubiquitinated by UBR5, leading to its degradation: UBR5 specifically recognizes and binds ligand-bound PGR when it is not associated with coactivators (NCOAs). In presence of NCOAs, the UBR5-degron is not accessible, preventing its ubiquitination and degradation. Palmitoylated by ZDHHC7 and ZDHHC21. Palmitoylation is required for plasma membrane targeting and for rapid intracellular signaling via ERK and AKT kinases and cAMP generation. In terms of tissue distribution, isoform A and isoform B are expressed in the pituitary.

The protein localises to the nucleus. It is found in the cytoplasm. The steroid hormones and their receptors are involved in the regulation of eukaryotic gene expression and affect cellular proliferation and differentiation in target tissues. Depending on the isoform, progesterone receptor functions as a transcriptional activator or repressor. Functionally, ligand-dependent transdominant repressor of steroid hormone receptor transcriptional activity including repression of its isoform B, MR and ER. Transrepressional activity may involve recruitment of corepressor NCOR2. In terms of biological role, transcriptional activator of several progesteron-dependent promoters in a variety of cell types. Involved in activation of SRC-dependent MAPK signaling on hormone stimulation. The chain is Progesterone receptor (Pgr) from Rattus norvegicus (Rat).